A 783-amino-acid chain; its full sequence is ATP-dependent zinc metalloprotease FtsH (783 aa).

The span at 1–16 (MSETPNTNEQNNPNNQ) shows a compositional bias: low complexity. Residues 1–79 (MSETPNTNEQ…DKEEDFASRL (79 aa)) are disordered. Residues 1–86 (MSETPNTNEQ…SRLNTRPPQR (86 aa)) are Cytoplasmic-facing. Over residues 35–61 (MPERPERHNQADGAPKRPGDDDRKSER) the composition is skewed to basic and acidic residues. A helical membrane pass occupies residues 87 to 107 (ASIITIIIIFLVAFFIGSQMM). Residues 108–233 (NMVHGEETDD…EYQVTLPSNV (126 aa)) are Extracellular-facing. The helical transmembrane segment at 234–254 (TEILISVLPMLLFAGLLIYFF) threads the bilayer. Topologically, residues 255–783 (SQMSKANNSQ…APQPPAAPQQ (529 aa)) are cytoplasmic. 325–332 (GPPGTGKT) is a binding site for ATP. His547 contacts Zn(2+). The active site involves Glu548. Positions 551 and 623 each coordinate Zn(2+). The span at 738-771 (EAAAKAADQAEQPQVEAEPVAQVATPAAPVAPAV) shows a compositional bias: low complexity. The tract at residues 738–783 (EAAAKAADQAEQPQVEAEPVAQVATPAAPVAPAVPEAPQPPAAPQQ) is disordered. Residues 772–783 (PEAPQPPAAPQQ) show a composition bias toward pro residues.

This sequence in the central section; belongs to the AAA ATPase family. The protein in the C-terminal section; belongs to the peptidase M41 family. Homohexamer. Zn(2+) is required as a cofactor.

The protein resides in the cell membrane. Its function is as follows. Acts as a processive, ATP-dependent zinc metallopeptidase for both cytoplasmic and membrane proteins. Plays a role in the quality control of integral membrane proteins. This chain is ATP-dependent zinc metalloprotease FtsH, found in Slackia heliotrinireducens (strain ATCC 29202 / DSM 20476 / NCTC 11029 / RHS 1) (Peptococcus heliotrinreducens).